The following is an 89-amino-acid chain: Small ribosomal subunit protein uS14 (89 aa).

It belongs to the universal ribosomal protein uS14 family. In terms of assembly, part of the 30S ribosomal subunit. Contacts proteins S3 and S10.

Binds 16S rRNA, required for the assembly of 30S particles and may also be responsible for determining the conformation of the 16S rRNA at the A site. This Deinococcus radiodurans (strain ATCC 13939 / DSM 20539 / JCM 16871 / CCUG 27074 / LMG 4051 / NBRC 15346 / NCIMB 9279 / VKM B-1422 / R1) protein is Small ribosomal subunit protein uS14.